Consider the following 63-residue polypeptide: Large ribosomal subunit protein uL29 (63 aa).

Belongs to the universal ribosomal protein uL29 family.

The protein is Large ribosomal subunit protein uL29 of Stutzerimonas stutzeri (strain A1501) (Pseudomonas stutzeri).